A 538-amino-acid chain; its full sequence is GSY2-interacting protein PIG2 (538 aa).

Residues Ser162, Ser196, Ser296, and Ser304 each carry the phosphoserine modification. Residues 384-508 form the CBM21 domain; it reads LNLSRGRPVF…NNDSANYKID (125 aa).

In terms of biological role, interacts with glycogen synthase 2 (GSY2); possibly also interacts with phosphatase 1 (GLC7). The chain is GSY2-interacting protein PIG2 (PIG2) from Saccharomyces cerevisiae (strain ATCC 204508 / S288c) (Baker's yeast).